The sequence spans 1178 residues: Zinc finger CCHC domain-containing protein 2 (1178 aa).

4 disordered regions span residues 1–90 (MLRM…GPSA), 207–249 (AARG…RVGG), 557–683 (VTSA…SVNQ), and 936–986 (LSTA…SDST). Over residues 43-67 (PPPPPPPPAGPSRGPLPPPPPPRGL) the composition is skewed to pro residues. Residues 75-88 (AAAGAGMPGGGGGP) show a composition bias toward gly residues. Residues 208 to 219 (ARGEGSRGGAED) show a composition bias toward basic and acidic residues. Residues 220-229 (ERGEDGDGEQ) show a composition bias toward acidic residues. The residue at position 236 (Ser-236) is a Phosphoserine. Residues 580–594 (PQTEKEKIKKTDNRL) show a composition bias toward basic and acidic residues. Over residues 595–607 (NSRINGIRLSTPQ) the composition is skewed to polar residues. A compositionally biased stretch (low complexity) spans 632–641 (SSESYSSPSS). The span at 642–661 (PRHDGRESFESEEEKDRDTD) shows a compositional bias: basic and acidic residues. A compositionally biased stretch (polar residues) spans 665–683 (EDSGNPSTTRFTGYGSVNQ). Low complexity predominate over residues 937-948 (STAATSPQPASA). Residues 959 to 973 (PAVPTHTPGPAPSPS) are compositionally biased toward pro residues. The segment covering 974-986 (PALTHSTAQSDST) has biased composition (polar residues). The CCHC-type zinc-finger motif lies at 1131–1148 (VSCYNCGVSGHYAQDCKQ).

This chain is Zinc finger CCHC domain-containing protein 2, found in Homo sapiens (Human).